The sequence spans 511 residues: Maturase K (511 aa).

It belongs to the intron maturase 2 family. MatK subfamily.

It localises to the plastid. It is found in the chloroplast. Usually encoded in the trnK tRNA gene intron. Probably assists in splicing its own and other chloroplast group II introns. The protein is Maturase K of Adesmia lanata.